A 564-amino-acid chain; its full sequence is Potassium-transporting ATPase potassium-binding subunit (564 aa).

Transmembrane regions (helical) follow at residues 7 to 27, 67 to 87, 135 to 155, 179 to 199, 258 to 278, 286 to 306, 382 to 402, 420 to 440, 487 to 507, and 528 to 548; these read LLIL…GRFF, AWAL…MLML, VGLT…LVAL, LYAL…QGVP, FELV…GHYV, AILG…LWAE, VGLN…GLMI, LLVA…AIAA, LMLS…VLAL, and GLLF…LTFL.

Belongs to the KdpA family. The system is composed of three essential subunits: KdpA, KdpB and KdpC.

It localises to the cell inner membrane. In terms of biological role, part of the high-affinity ATP-driven potassium transport (or Kdp) system, which catalyzes the hydrolysis of ATP coupled with the electrogenic transport of potassium into the cytoplasm. This subunit binds the periplasmic potassium ions and delivers the ions to the membrane domain of KdpB through an intramembrane tunnel. This chain is Potassium-transporting ATPase potassium-binding subunit, found in Pseudomonas syringae pv. tomato (strain ATCC BAA-871 / DC3000).